The primary structure comprises 259 residues: Apolipoprotein A-I (259 aa).

The N-terminal stretch at M1–A18 is a signal peptide. Repeat copies occupy residues L67–G88 and P89–N110. The tract at residues L67–A259 is 10 X approximate tandem repeats. M109 bears the Methionine sulfoxide mark. Residues K111–Q121 form a 3; half-length repeat. Repeat unit 4 spans residues P122–E143. Residues P144–K161 form a 5; truncated repeat. Residues V162–G183 form repeat 6. One copy of the 7; truncated repeat lies at L184 to H203. M189 carries the methionine sulfoxide modification. The stretch at P204 to K225 is repeat 8. A 9; half-length repeat occupies P226–M236. The residue at position 236 (M236) is a Methionine sulfoxide. Copy 10 of the repeat occupies P237–A259.

Belongs to the apolipoprotein A1/A4/E family. Homodimer. Interacts with APOA1BP and CLU. Component of a sperm activating protein complex (SPAP), consisting of APOA1, an immunoglobulin heavy chain, an immunoglobulin light chain and albumin. Interacts with NDRG1. Interacts with SCGB3A2. Interacts with NAXE and YJEFN3. Post-translationally, glycosylated. Palmitoylated. In terms of processing, phosphorylation sites are present in the extracellular medium. Major protein of plasma HDL, also found in chylomicrons.

The protein resides in the secreted. Participates in the reverse transport of cholesterol from tissues to the liver for excretion by promoting cholesterol efflux from tissues and by acting as a cofactor for the lecithin cholesterol acyltransferase (LCAT). As part of the SPAP complex, activates spermatozoa motility. The chain is Apolipoprotein A-I (Apoa1) from Rattus norvegicus (Rat).